Consider the following 432-residue polypeptide: Glutamyl-tRNA reductase (432 aa).

Residues 55–58 (TCNR), Ser-114, 119–121 (ETQ), and Gln-125 each bind substrate. Residue Cys-56 is the Nucleophile of the active site. 194 to 199 (GAGEMI) serves as a coordination point for NADP(+).

This sequence belongs to the glutamyl-tRNA reductase family. In terms of assembly, homodimer.

It carries out the reaction (S)-4-amino-5-oxopentanoate + tRNA(Glu) + NADP(+) = L-glutamyl-tRNA(Glu) + NADPH + H(+). The protein operates within porphyrin-containing compound metabolism; protoporphyrin-IX biosynthesis; 5-aminolevulinate from L-glutamyl-tRNA(Glu): step 1/2. In terms of biological role, catalyzes the NADPH-dependent reduction of glutamyl-tRNA(Glu) to glutamate 1-semialdehyde (GSA). The sequence is that of Glutamyl-tRNA reductase from Burkholderia thailandensis (strain ATCC 700388 / DSM 13276 / CCUG 48851 / CIP 106301 / E264).